The sequence spans 317 residues: E3 ubiquitin-protein ligase NRDP1 (317 aa).

An RING-type; degenerate zinc finger spans residues 18–57; it reads CPICSGVLEEPVQAPHCEHAFCNACITQWFSQQQTCPVDR. Residues 135-175 adopt a coiled-coil conformation; sequence IKHLRSVVQQQQIRIGELEKTAAESKHQLSEQKRDIQLLKA.

It catalyses the reaction S-ubiquitinyl-[E2 ubiquitin-conjugating enzyme]-L-cysteine + [acceptor protein]-L-lysine = [E2 ubiquitin-conjugating enzyme]-L-cysteine + N(6)-ubiquitinyl-[acceptor protein]-L-lysine.. It participates in protein modification; protein ubiquitination. Functionally, acts as E3 ubiquitin-protein ligase and regulates the degradation of target proteins. This is E3 ubiquitin-protein ligase NRDP1 (rnf41) from Xenopus laevis (African clawed frog).